Reading from the N-terminus, the 874-residue chain is Alanine--tRNA ligase (874 aa).

Positions 562, 566, 665, and 669 each coordinate Zn(2+).

Belongs to the class-II aminoacyl-tRNA synthetase family. It depends on Zn(2+) as a cofactor.

It localises to the cytoplasm. The enzyme catalyses tRNA(Ala) + L-alanine + ATP = L-alanyl-tRNA(Ala) + AMP + diphosphate. Its function is as follows. Catalyzes the attachment of alanine to tRNA(Ala) in a two-step reaction: alanine is first activated by ATP to form Ala-AMP and then transferred to the acceptor end of tRNA(Ala). Also edits incorrectly charged Ser-tRNA(Ala) and Gly-tRNA(Ala) via its editing domain. This chain is Alanine--tRNA ligase, found in Pseudomonas entomophila (strain L48).